Consider the following 305-residue polypeptide: GTPase Era (305 aa).

Positions 9-176 (KSGFISIIGR…LDTLPKYLPE (168 aa)) constitute an Era-type G domain. Residues 17 to 24 (GRPNVGKS) form a G1 region. 17-24 (GRPNVGKS) serves as a coordination point for GTP. Positions 43-47 (QTTRN) are G2. Positions 64–67 (DTPG) are G3. GTP contacts are provided by residues 64–68 (DTPGI) and 126–129 (NKID). The G4 stretch occupies residues 126-129 (NKID). The segment at 155-157 (ISA) is G5. Residues 207-286 (TREEIPHSIA…YLELWVKVQK (80 aa)) form the KH type-2 domain.

Belongs to the TRAFAC class TrmE-Era-EngA-EngB-Septin-like GTPase superfamily. Era GTPase family. In terms of assembly, monomer.

Its subcellular location is the cytoplasm. It is found in the cell membrane. Functionally, an essential GTPase that binds both GDP and GTP, with rapid nucleotide exchange. Plays a role in 16S rRNA processing and 30S ribosomal subunit biogenesis and possibly also in cell cycle regulation and energy metabolism. This Lysinibacillus sphaericus (strain C3-41) protein is GTPase Era.